The following is an 888-amino-acid chain: Inactive deaminase YJL070C (888 aa).

The disordered stretch occupies residues 1–42; it reads MQAVERRPSLLFDEYQNSVTKPNETKNKEARVLSENDGDVSP. A Phosphoserine modification is found at S9. Residues 23 to 34 are compositionally biased toward basic and acidic residues; it reads NETKNKEARVLS. 3 positions are modified to phosphoserine: S41, S178, and S180.

The protein belongs to the metallo-dependent hydrolases superfamily. Adenosine and AMP deaminases family.

The sequence is that of Inactive deaminase YJL070C from Saccharomyces cerevisiae (strain ATCC 204508 / S288c) (Baker's yeast).